Consider the following 359-residue polypeptide: Homeotic protein knotted-1 (359 aa).

Disordered regions lie at residues 1–34 (MEEITQHFGVGASSHGHGHGQHHHHHHHHHPWAS) and 213–232 (LSSGSSEEDQEGSGGETELP). Over residues 16–31 (GHGHGQHHHHHHHHHP) the composition is skewed to basic residues. The region spanning 242–262 (ELKHHLLKKYSGYLSSLKQEL) is the ELK domain. The homeobox; TALE-type DNA-binding region spans 263–326 (SKKKKKGKLP…NQRKRHWKPS (64 aa)).

The protein belongs to the TALE/KNOX homeobox family. As to quaternary structure, forms homodimers. Binds to MBP2C; this interaction reduces RNA binding capacity. As to expression, expressed in apical meristems of vegetative and floral stems as well as in the underlying ground meristem. Specifically expressed in vascular bundles developing both in the leaf and stem. Very low levels of expression in leaves.

It localises to the nucleus. The protein resides in the cell junction. Its subcellular location is the plasmodesma. The protein localises to the cytoplasm. In terms of biological role, binds to RNA. Possible transcription factor that regulates genes involved in development. Mutations in KN-1 alter leaf development. Foci of cells along the lateral vein do not differentiate properly but continue to divide, forming knots. May participate in the switch from indeterminate to determinate cell fates. Probably binds to the DNA sequence 5'-TGAC-3'. This Zea mays (Maize) protein is Homeotic protein knotted-1 (KN-1).